Consider the following 184-residue polypeptide: Putative pre-16S rRNA nuclease (184 aa).

The interval 1–23 (MFSSQHRLLYQPSGPDLSKNLDP) is disordered.

This sequence belongs to the YqgF nuclease family.

Its subcellular location is the cytoplasm. Functionally, could be a nuclease involved in processing of the 5'-end of pre-16S rRNA. The chain is Putative pre-16S rRNA nuclease from Mycobacterium leprae (strain Br4923).